Consider the following 155-residue polypeptide: uncharacterized protein (155 aa).

4 consecutive transmembrane segments (helical) span residues 25-45 (LPMG…FGWT), 50-70 (IFWF…IMTS), 91-111 (GVKI…ESLF), and 118-138 (WGCT…PILF).

The protein belongs to the major facilitator superfamily. CAR1 family.

Its subcellular location is the membrane. This is an uncharacterized protein from Schizosaccharomyces pombe (strain 972 / ATCC 24843) (Fission yeast).